A 134-amino-acid chain; its full sequence is Histone H2B (134 aa).

Over residues Met-1–Lys-10 the composition is skewed to polar residues. Disordered regions lie at residues Met-1 to Lys-29 and Val-113 to Arg-134. Positions Ala-12 to Lys-29 are enriched in basic and acidic residues. A compositionally biased stretch (polar residues) spans Gly-125–Arg-134.

This sequence belongs to the histone H2B family. The nucleosome is a histone octamer containing two molecules each of H2A, H2B, H3 and H4 assembled in one H3-H4 heterotetramer and two H2A-H2B heterodimers. The octamer wraps approximately 147 bp of DNA.

The protein resides in the nucleus. It is found in the chromosome. In terms of biological role, core component of nucleosome. Nucleosomes wrap and compact DNA into chromatin, limiting DNA accessibility to the cellular machineries which require DNA as a template. Histones thereby play a central role in transcription regulation, DNA repair, DNA replication and chromosomal stability. DNA accessibility is regulated via a complex set of post-translational modifications of histones, also called histone code, and nucleosome remodeling. This Entamoeba invadens protein is Histone H2B.